Here is a 553-residue protein sequence, read N- to C-terminus: Phosphoglucomutase (553 aa).

Residues 1–25 (MQATIKRYPTSPISGQTLGTSGLRK) form a disordered region. Residues 11-20 (SPISGQTLGT) are compositionally biased toward polar residues. Substrate-binding positions include Thr20, Arg24, 117-118 (SH), and Lys131. The Phosphoserine intermediate role is filled by Ser117. Ser117 contributes to the Mg(2+) binding site. Residues Asp289, Asp291, and Asp293 each coordinate Mg(2+). Residues 293–294 (DR), Thr352, 371–373 (EES), Lys384, and Arg509 contribute to the substrate site.

It belongs to the phosphohexose mutase family. Requires Mg(2+) as cofactor.

The protein resides in the cytoplasm. The enzyme catalyses alpha-D-glucose 1-phosphate = alpha-D-glucose 6-phosphate. In terms of biological role, catalyzes the reversible conversion of glucose 1-phosphate into glucose 6-phosphate. This enzyme participates in both the breakdown and synthesis of glucose. This is Phosphoglucomutase from Entamoeba histolytica (strain ATCC 30459 / HM-1:IMSS / ABRM).